Here is a 587-residue protein sequence, read N- to C-terminus: Probable pectinesterase/pectinesterase inhibitor 61 (587 aa).

Positions 1 to 23 (MGYDRLGPSGPSNPNQKDPATSL) are disordered. A compositionally biased stretch (polar residues) spans 10 to 19 (GPSNPNQKDP). The helical transmembrane segment at 35-55 (ILFTLAVLVVGVVCFGIFAGI) threads the bilayer. The pectinesterase inhibitor 61 stretch occupies residues 69–223 (RKPTQAISRT…SEMVSNCLAI (155 aa)). Residues 273–571 (DITVSKDGSG…FTVAQFISGS (299 aa)) are pectinesterase 61. Residues threonine 349 and glutamine 379 each contribute to the substrate site. Catalysis depends on aspartate 402, which acts as the Proton donor; for pectinesterase activity. Cysteine 416 and cysteine 436 are joined by a disulfide. Aspartate 423 serves as the catalytic Nucleophile; for pectinesterase activity. Residues arginine 491 and tryptophan 493 each coordinate substrate.

This sequence in the N-terminal section; belongs to the PMEI family. It in the C-terminal section; belongs to the pectinesterase family. Expressed in siliques, floral stems and rosettes leaves.

The protein resides in the membrane. The catalysed reaction is [(1-&gt;4)-alpha-D-galacturonosyl methyl ester](n) + n H2O = [(1-&gt;4)-alpha-D-galacturonosyl](n) + n methanol + n H(+). Its pathway is glycan metabolism; pectin degradation; 2-dehydro-3-deoxy-D-gluconate from pectin: step 1/5. Functionally, acts in the modification of cell walls via demethylesterification of cell wall pectin. The chain is Probable pectinesterase/pectinesterase inhibitor 61 (PME61) from Arabidopsis thaliana (Mouse-ear cress).